The sequence spans 372 residues: Cyclin-A3-2 (372 aa).

Residues 53-73 (NQKKETQKPKRNLKPPPAKQI) are disordered.

Belongs to the cyclin family. Cyclin AB subfamily.

The sequence is that of Cyclin-A3-2 (CYCA3-2) from Arabidopsis thaliana (Mouse-ear cress).